Reading from the N-terminus, the 353-residue chain is Rhodopsin (353 aa).

Residues 1 to 36 are Extracellular-facing; it reads MNGTEGPYFYIPMVNTTGIVRSPYEYPQYYLVNPAA. Residues asparagine 2 and asparagine 15 are each glycosylated (N-linked (GlcNAc...) asparagine). A helical transmembrane segment spans residues 37 to 61; that stretch reads YAALGAYMFLLILVGFPINFLTLYV. Residues 62–73 lie on the Cytoplasmic side of the membrane; sequence TIEHKKLRTPLN. A helical transmembrane segment spans residues 74 to 96; that stretch reads YILLNLAVANLFMVFGGFTTTMY. The Extracellular portion of the chain corresponds to 97–110; sequence TSMHGYFVLGRLGC. A disulfide bridge links cysteine 110 with cysteine 187. The helical transmembrane segment at 111 to 133 threads the bilayer; that stretch reads NLEGFFATLGGEIALWSLVVLAI. A 'Ionic lock' involved in activated form stabilization motif is present at residues 134–136; it reads ERW. Residues 134-152 lie on the Cytoplasmic side of the membrane; the sequence is ERWMVVCKPISNFRFGEDH. The chain crosses the membrane as a helical span at residues 153–173; it reads AIMGLAFTWVMAAACAVPPLV. Topologically, residues 174-202 are extracellular; it reads GWSRYIPEGMQCSCGIDYYTRAEGFNNES. N-linked (GlcNAc...) asparagine glycosylation occurs at asparagine 200. Residues 203–224 form a helical membrane-spanning segment; the sequence is FVIYMFVCHFLIPLVVVFFCYG. Residues 225-252 are Cytoplasmic-facing; sequence RLLCAVKEAAAAQQESETTQRAEREVSR. The helical transmembrane segment at 253–274 threads the bilayer; the sequence is MVVIMVVAFLICWCPYAGVAWY. Residues 275 to 286 are Extracellular-facing; the sequence is IFTHQGSEFGPL. A helical membrane pass occupies residues 287–308; it reads FMTFPAFFAKSSSIYNPMIYIC. The residue at position 296 (lysine 296) is an N6-(retinylidene)lysine. Residues 309 to 353 lie on the Cytoplasmic side of the membrane; it reads MNKQFRHCMITTLCCGKNPFEEEEGASTTSKTEASSVSSSSVSPA. 2 S-palmitoyl cysteine lipidation sites follow: cysteine 322 and cysteine 323. Residues 330–353 are disordered; sequence EEEGASTTSKTEASSVSSSSVSPA. The segment covering 334–353 has biased composition (low complexity); the sequence is ASTTSKTEASSVSSSSVSPA.

Belongs to the G-protein coupled receptor 1 family. Opsin subfamily. In terms of processing, phosphorylated on some or all of the serine and threonine residues present in the C-terminal region. Post-translationally, contains one covalently linked retinal chromophore.

It is found in the membrane. The protein resides in the cell projection. The protein localises to the cilium. It localises to the photoreceptor outer segment. Its function is as follows. Photoreceptor required for image-forming vision at low light intensity. While most salt water fish species use retinal as chromophore, most freshwater fish use 3-dehydroretinal, or a mixture of retinal and 3-dehydroretinal. Light-induced isomerization of 11-cis to all-trans retinal triggers a conformational change that activates signaling via G-proteins. Subsequent receptor phosphorylation mediates displacement of the bound G-protein alpha subunit by arrestin and terminates signaling. The polypeptide is Rhodopsin (rho) (Chelon saliens (Leaping mullet)).